Reading from the N-terminus, the 211-residue chain is Histone H1-beta, late embryonic (211 aa).

Disordered regions lie at residues 1 to 22 (MAAE…PSSS) and 81 to 211 (KGAS…AAKK). Residues 17-91 (AHPSSSEMVL…GASGSFKLGK (75 aa)) form the H15 domain. 2 stretches are compositionally biased toward basic and acidic residues: residues 95–107 (GKSD…DAAK) and 114–123 (KKKEAKEKKA). Composition is skewed to basic residues over residues 124 to 177 (ARSK…KKAA) and 185 to 211 (KAAK…AAKK).

It belongs to the histone H1/H5 family.

It localises to the nucleus. Its subcellular location is the chromosome. In terms of biological role, histones H1 are necessary for the condensation of nucleosome chains into higher-order structures. The polypeptide is Histone H1-beta, late embryonic (Strongylocentrotus purpuratus (Purple sea urchin)).